The following is a 274-amino-acid chain: Large ribosomal subunit protein uL2 (274 aa).

Disordered stretches follow at residues A28–G55 and V224–K274.

It belongs to the universal ribosomal protein uL2 family. As to quaternary structure, part of the 50S ribosomal subunit. Forms a bridge to the 30S subunit in the 70S ribosome.

Its function is as follows. One of the primary rRNA binding proteins. Required for association of the 30S and 50S subunits to form the 70S ribosome, for tRNA binding and peptide bond formation. It has been suggested to have peptidyltransferase activity; this is somewhat controversial. Makes several contacts with the 16S rRNA in the 70S ribosome. This Pseudomonas putida (strain ATCC 47054 / DSM 6125 / CFBP 8728 / NCIMB 11950 / KT2440) protein is Large ribosomal subunit protein uL2.